We begin with the raw amino-acid sequence, 156 residues long: ATP synthase subunit b (156 aa).

Residues 7-27 form a helical membrane-spanning segment; sequence LIGQTVAFIIFVWFCMKFVWP.

This sequence belongs to the ATPase B chain family. F-type ATPases have 2 components, F(1) - the catalytic core - and F(0) - the membrane proton channel. F(1) has five subunits: alpha(3), beta(3), gamma(1), delta(1), epsilon(1). F(0) has three main subunits: a(1), b(2) and c(10-14). The alpha and beta chains form an alternating ring which encloses part of the gamma chain. F(1) is attached to F(0) by a central stalk formed by the gamma and epsilon chains, while a peripheral stalk is formed by the delta and b chains.

Its subcellular location is the cell inner membrane. Its function is as follows. F(1)F(0) ATP synthase produces ATP from ADP in the presence of a proton or sodium gradient. F-type ATPases consist of two structural domains, F(1) containing the extramembraneous catalytic core and F(0) containing the membrane proton channel, linked together by a central stalk and a peripheral stalk. During catalysis, ATP synthesis in the catalytic domain of F(1) is coupled via a rotary mechanism of the central stalk subunits to proton translocation. Component of the F(0) channel, it forms part of the peripheral stalk, linking F(1) to F(0). This is ATP synthase subunit b from Shewanella baltica (strain OS185).